Consider the following 321-residue polypeptide: Cytochrome f (321 aa).

An N-terminal signal peptide occupies residues 1 to 35 (MQNTNTLNWINKLIYLSISIPIFFLILVTTYPNSV). Tyrosine 38, cysteine 58, cysteine 61, and histidine 62 together coordinate heme. A helical membrane pass occupies residues 287–307 (MEGLILFFISVILAQVFLVLK).

This sequence belongs to the cytochrome f family. In terms of assembly, the 4 large subunits of the cytochrome b6-f complex are cytochrome b6, subunit IV (17 kDa polypeptide, petD), cytochrome f and the Rieske protein, while the 4 small subunits are PetG, PetL, PetM and PetN. The complex functions as a dimer. It depends on heme as a cofactor.

It is found in the plastid. The protein localises to the chloroplast thylakoid membrane. Functionally, component of the cytochrome b6-f complex, which mediates electron transfer between photosystem II (PSII) and photosystem I (PSI), cyclic electron flow around PSI, and state transitions. The sequence is that of Cytochrome f from Chara vulgaris (Common stonewort).